The following is a 310-amino-acid chain: Aspartate carbamoyltransferase catalytic subunit (310 aa).

Arg-58 and Thr-59 together coordinate carbamoyl phosphate. L-aspartate is bound at residue Lys-86. Carbamoyl phosphate-binding residues include Arg-108, His-136, and Gln-139. Positions 169 and 224 each coordinate L-aspartate. The carbamoyl phosphate site is built by Gly-265 and Pro-266.

It belongs to the aspartate/ornithine carbamoyltransferase superfamily. ATCase family. As to quaternary structure, heterododecamer (2C3:3R2) of six catalytic PyrB chains organized as two trimers (C3), and six regulatory PyrI chains organized as three dimers (R2).

The enzyme catalyses carbamoyl phosphate + L-aspartate = N-carbamoyl-L-aspartate + phosphate + H(+). It functions in the pathway pyrimidine metabolism; UMP biosynthesis via de novo pathway; (S)-dihydroorotate from bicarbonate: step 2/3. Functionally, catalyzes the condensation of carbamoyl phosphate and aspartate to form carbamoyl aspartate and inorganic phosphate, the committed step in the de novo pyrimidine nucleotide biosynthesis pathway. The polypeptide is Aspartate carbamoyltransferase catalytic subunit (Trichlorobacter lovleyi (strain ATCC BAA-1151 / DSM 17278 / SZ) (Geobacter lovleyi)).